The following is a 475-amino-acid chain: Chemotaxis protein MotD (475 aa).

3 disordered regions span residues 1-175 (MRPL…PVGG), 195-243 (LQPE…SEPD), and 408-475 (GDSA…HVYM). Residues 9–22 (RTSAASRPAQSLSV) show a composition bias toward polar residues. Low complexity predominate over residues 79–100 (ADVPASMADAASPDARPASERA). The segment covering 143 to 155 (HSRETVHALRDAI) has biased composition (basic and acidic residues). Over residues 408–417 (GDSASGGGGQ) the composition is skewed to gly residues. Over residues 427–449 (EGRERAGDDGQGRQPRDGGRAAT) the composition is skewed to basic and acidic residues.

Its subcellular location is the cytoplasm. Required for the rotation of the flagellar motor. Has a positive effect as flagellar rotation increases when an excess of motd is present. The protein is Chemotaxis protein MotD (motD) of Rhizobium meliloti (Ensifer meliloti).